Reading from the N-terminus, the 200-residue chain is MTVMDNPPVTMEDFFETSRGLWLIRRVVHHLDSQDDEAADSNLVIEPFNASDEAVEKVCKVFGIEASEANGGARFWWESNLLAEKRNDDYAAIVIDVPKPEHPDQGYLLRDVGYVEKKPALSTYEFTPDGVLTIKTRYDTNFGIERCWFVNDQIRMRVSSVQFLNGAAMTTYCTEFRCPSKADIEQIANQAKTFAQTNPL.

It belongs to the CpcS/CpeS biliprotein lyase family.

In terms of biological role, covalently attaches a chromophore to Cys residue(s) of phycobiliproteins. The chain is Chromophore lyase CpcS/CpeS from Synechococcus sp. (strain WH8020).